The sequence spans 237 residues: Ribosomal RNA small subunit methyltransferase G (237 aa).

Residues glycine 78, phenylalanine 83, 129-130 (AE), and arginine 148 each bind S-adenosyl-L-methionine. The segment at 218–237 (KKETPNKYPRKAGMPNKRPL) is disordered.

This sequence belongs to the methyltransferase superfamily. RNA methyltransferase RsmG family.

Its subcellular location is the cytoplasm. Specifically methylates the N7 position of a guanine in 16S rRNA. The sequence is that of Ribosomal RNA small subunit methyltransferase G from Streptococcus pneumoniae (strain JJA).